The sequence spans 47 residues: Zinc-finger protein TK0143 (47 aa).

The C2H2-type zinc finger occupies 18–41; sequence FRCPRCGMVFRSAKAYTRHVNKAH. Residues cysteine 20, cysteine 23, histidine 36, and histidine 41 each coordinate Zn(2+).

As to quaternary structure, crystallized in association with 70S ribosomes. Zn(2+) is required as a cofactor.

In Thermococcus kodakarensis (strain ATCC BAA-918 / JCM 12380 / KOD1) (Pyrococcus kodakaraensis (strain KOD1)), this protein is Zinc-finger protein TK0143.